The sequence spans 260 residues: Thiamine thiazole synthase (260 aa).

Residues A36, 55-56 (EQ), G63, and 154-156 (HVD) contribute to the NAD(+) site. Fe cation-binding residues include D156 and H171. M224 is a binding site for NAD(+). R234 contacts glycine.

The protein belongs to the THI4 family. As to quaternary structure, homooctamer; tetramer of dimers. Fe(2+) is required as a cofactor.

It catalyses the reaction hydrogen sulfide + glycine + NAD(+) = ADP-5-ethyl-4-methylthiazole-2-carboxylate + nicotinamide + 3 H2O + H(+). Its pathway is cofactor biosynthesis; thiamine diphosphate biosynthesis. Its function is as follows. Involved in the biosynthesis of the thiazole moiety of thiamine. Catalyzes the conversion of NAD and glycine to adenosine diphosphate 5-(2-hydroxyethyl)-4-methylthiazole-2-carboxylate (ADT), an adenylated thiazole intermediate, using free sulfide as a source of sulfur. This Methanosarcina barkeri (strain Fusaro / DSM 804) protein is Thiamine thiazole synthase.